Reading from the N-terminus, the 346-residue chain is Methylthioribose-1-phosphate isomerase (346 aa).

Substrate is bound by residues 50–52, Arg93, and Gln196; that span reads RGA. The active-site Proton donor is Asp237. 247–248 contributes to the substrate binding site; the sequence is NK.

This sequence belongs to the eIF-2B alpha/beta/delta subunits family. MtnA subfamily.

The catalysed reaction is 5-(methylsulfanyl)-alpha-D-ribose 1-phosphate = 5-(methylsulfanyl)-D-ribulose 1-phosphate. It functions in the pathway amino-acid biosynthesis; L-methionine biosynthesis via salvage pathway; L-methionine from S-methyl-5-thio-alpha-D-ribose 1-phosphate: step 1/6. Its function is as follows. Catalyzes the interconversion of methylthioribose-1-phosphate (MTR-1-P) into methylthioribulose-1-phosphate (MTRu-1-P). This Alkalilimnicola ehrlichii (strain ATCC BAA-1101 / DSM 17681 / MLHE-1) protein is Methylthioribose-1-phosphate isomerase.